The following is an 85-amino-acid chain: Putative regulatory protein DICTH_1339 (85 aa).

The protein belongs to the RemA family.

In Dictyoglomus thermophilum (strain ATCC 35947 / DSM 3960 / H-6-12), this protein is Putative regulatory protein DICTH_1339.